The sequence spans 522 residues: Alanine aminotransferase 2 (522 aa).

N6-(pyridoxal phosphate)lysine is present on Lys-340. N6-acetyllysine occurs at positions 414, 504, and 511.

It belongs to the class-I pyridoxal-phosphate-dependent aminotransferase family. Alanine aminotransferase subfamily. Homodimer. Pyridoxal 5'-phosphate serves as cofactor. Specifically induced in fatty liver. Highly expressed in muscle, liver and white adipose tissue. Moderately expressed in brain and kidney and expressed at low levels in the heart.

The catalysed reaction is L-alanine + 2-oxoglutarate = pyruvate + L-glutamate. Its pathway is amino-acid degradation; L-alanine degradation via transaminase pathway; pyruvate from L-alanine: step 1/1. In terms of biological role, catalyzes the reversible transamination between alanine and 2-oxoglutarate to form pyruvate and glutamate. This Mus musculus (Mouse) protein is Alanine aminotransferase 2 (Gpt2).